Here is a 418-residue protein sequence, read N- to C-terminus: Putative heat shock protein HSP 90-alpha A4 (418 aa).

4 residues coordinate ATP: aspartate 33, lysine 52, phenylalanine 78, and arginine 204. Disordered regions lie at residues 255–289 and 383–418; these read EDLE…TSAK and GLGT…RMEK. Basic and acidic residues predominate over residues 265 to 274; sequence EKKKQEEGKQ.

Belongs to the heat shock protein 90 family. As to quaternary structure, homodimer.

It localises to the cytoplasm. Putative molecular chaperone that may promote the maturation, structural maintenance and proper regulation of specific target proteins. The sequence is that of Putative heat shock protein HSP 90-alpha A4 (HSP90AA4P) from Homo sapiens (Human).